A 334-amino-acid chain; its full sequence is MTEEKKINPPIFPFTAIVGQEEMKLALQLNVIDPKIGGVMIMGDRGTGKSTTIRAIADLLPEIEVVKDNQFNTAPSEDLNEEIVKIKTPMIDLPLGATEDRVCGTIDIEKALTDGVKAFEPGLLAKANRGILYVDEVNLLDDHLVDILLDSAASGLNTVEREGISIRHAARFVLVGSGNPEEGELRPQLLDRFGMHAVIKTVKDPKLRVRVVEERTLFDLNPEEWINKYREQQEALKTRIIAAQNLISSVTISDDFKLKISQVCSELDVDGLRGDIVTNRAAKAYAAFNNRTEVEIGDIEKVITLCLRHRLRKDPLETIDSGDKVQKLFEEIFD.

G43–S50 is a binding site for ATP.

It belongs to the Mg-chelatase subunits D/I family.

The protein localises to the plastid. Its subcellular location is the chloroplast. The catalysed reaction is protoporphyrin IX + Mg(2+) + ATP + H2O = Mg-protoporphyrin IX + ADP + phosphate + 3 H(+). It functions in the pathway porphyrin-containing compound metabolism; chlorophyll biosynthesis. Involved in chlorophyll biosynthesis; introduces a magnesium ion into protoporphyrin IX to yield Mg-protoporphyrin IX. This chain is Magnesium-chelatase subunit ChlI (chlI), found in Olisthodiscus luteus (Marine phytoflagellate).